A 169-amino-acid polypeptide reads, in one-letter code: Sorting nexin-24 (169 aa).

N-acetylmethionine is present on Met-1. Residues 1 to 125 (MEVYIPSFRH…SFDETESEES (125 aa)) enclose the PX domain. A 1,2-diacyl-sn-glycero-3-phospho-(1D-myo-inositol-3-phosphate)-binding residues include Arg-38, Ser-40, Lys-61, and Arg-74. Ser-113 and Ser-116 each carry phosphoserine.

It belongs to the sorting nexin family.

It localises to the cytoplasmic vesicle membrane. In terms of biological role, may be involved in several stages of intracellular trafficking. This is Sorting nexin-24 (Snx24) from Rattus norvegicus (Rat).